Reading from the N-terminus, the 121-residue chain is Large ribosomal subunit protein bL12 (121 aa).

The protein belongs to the bacterial ribosomal protein bL12 family. In terms of assembly, homodimer. Part of the ribosomal stalk of the 50S ribosomal subunit. Forms a multimeric L10(L12)X complex, where L10 forms an elongated spine to which 2 to 4 L12 dimers bind in a sequential fashion. Binds GTP-bound translation factors.

Functionally, forms part of the ribosomal stalk which helps the ribosome interact with GTP-bound translation factors. Is thus essential for accurate translation. In Mesomycoplasma hyopneumoniae (strain 7448) (Mycoplasma hyopneumoniae), this protein is Large ribosomal subunit protein bL12.